A 608-amino-acid polypeptide reads, in one-letter code: Elongation factor 4 (608 aa).

A tr-type G domain is found at 11 to 193 (KKIRNFSIIA…QIVEKVPEPS (183 aa)). Residues 23–28 (DHGKST) and 140–143 (NKID) each bind GTP.

This sequence belongs to the TRAFAC class translation factor GTPase superfamily. Classic translation factor GTPase family. LepA subfamily.

The protein localises to the cell membrane. It catalyses the reaction GTP + H2O = GDP + phosphate + H(+). In terms of biological role, required for accurate and efficient protein synthesis under certain stress conditions. May act as a fidelity factor of the translation reaction, by catalyzing a one-codon backward translocation of tRNAs on improperly translocated ribosomes. Back-translocation proceeds from a post-translocation (POST) complex to a pre-translocation (PRE) complex, thus giving elongation factor G a second chance to translocate the tRNAs correctly. Binds to ribosomes in a GTP-dependent manner. In Listeria innocua serovar 6a (strain ATCC BAA-680 / CLIP 11262), this protein is Elongation factor 4.